We begin with the raw amino-acid sequence, 467 residues long: ATP-dependent protease ATPase subunit HslU (467 aa).

Residues valine 22 and 64–69 (GVGKTE) each bind ATP. The segment at 149–192 (QTNNPLESLFGGAIPNFGQNNEDEEEPPTEEIKTKRSEIKRQLE) is disordered. A compositionally biased stretch (basic and acidic residues) spans 178-192 (EEIKTKRSEIKRQLE). Residues aspartate 280, glutamate 345, and arginine 417 each coordinate ATP.

This sequence belongs to the ClpX chaperone family. HslU subfamily. In terms of assembly, a double ring-shaped homohexamer of HslV is capped on each side by a ring-shaped HslU homohexamer. The assembly of the HslU/HslV complex is dependent on binding of ATP.

Its subcellular location is the cytoplasm. Functionally, ATPase subunit of a proteasome-like degradation complex; this subunit has chaperone activity. The binding of ATP and its subsequent hydrolysis by HslU are essential for unfolding of protein substrates subsequently hydrolyzed by HslV. HslU recognizes the N-terminal part of its protein substrates and unfolds these before they are guided to HslV for hydrolysis. The polypeptide is ATP-dependent protease ATPase subunit HslU (Staphylococcus aureus (strain MW2)).